A 631-amino-acid chain; its full sequence is 1-deoxy-D-xylulose-5-phosphate synthase (631 aa).

Residues His-76 and 117–119 (AHS) contribute to the thiamine diphosphate site. Asp-148 contributes to the Mg(2+) binding site. Thiamine diphosphate is bound by residues 149–150 (GA), Asn-177, Tyr-284, and Glu-365. Asn-177 is a Mg(2+) binding site.

The protein belongs to the transketolase family. DXPS subfamily. Homodimer. Mg(2+) serves as cofactor. Thiamine diphosphate is required as a cofactor.

The enzyme catalyses D-glyceraldehyde 3-phosphate + pyruvate + H(+) = 1-deoxy-D-xylulose 5-phosphate + CO2. It functions in the pathway metabolic intermediate biosynthesis; 1-deoxy-D-xylulose 5-phosphate biosynthesis; 1-deoxy-D-xylulose 5-phosphate from D-glyceraldehyde 3-phosphate and pyruvate: step 1/1. Catalyzes the acyloin condensation reaction between C atoms 2 and 3 of pyruvate and glyceraldehyde 3-phosphate to yield 1-deoxy-D-xylulose-5-phosphate (DXP). This chain is 1-deoxy-D-xylulose-5-phosphate synthase, found in Methylibium petroleiphilum (strain ATCC BAA-1232 / LMG 22953 / PM1).